A 328-amino-acid chain; its full sequence is GMP reductase (328 aa).

Cys176 (thioimidate intermediate) is an active-site residue. Residue 205–228 participates in NADP(+) binding; that stretch reads IIADGGIRTHGDIAKSIRFGASMI.

This sequence belongs to the IMPDH/GMPR family. GuaC type 2 subfamily.

The catalysed reaction is IMP + NH4(+) + NADP(+) = GMP + NADPH + 2 H(+). Catalyzes the irreversible NADPH-dependent deamination of GMP to IMP. It functions in the conversion of nucleobase, nucleoside and nucleotide derivatives of G to A nucleotides, and in maintaining the intracellular balance of A and G nucleotides. The polypeptide is GMP reductase (Streptococcus pneumoniae (strain JJA)).